The following is a 369-amino-acid chain: Peptide chain release factor 2 (369 aa).

Gln249 is modified (N5-methylglutamine).

It belongs to the prokaryotic/mitochondrial release factor family. In terms of processing, methylated by PrmC. Methylation increases the termination efficiency of RF2.

It localises to the cytoplasm. Its function is as follows. Peptide chain release factor 2 directs the termination of translation in response to the peptide chain termination codons UGA and UAA. The polypeptide is Peptide chain release factor 2 (Thermosipho melanesiensis (strain DSM 12029 / CIP 104789 / BI429)).